Consider the following 116-residue polypeptide: MAGRLLANLIVMGSGIIGRAVFQAYRQALANASKSGVAQEAMQNGVRQAGKAITEQEARQILGVTEKTSWEEILQKYDKLFENNAKAGSFYLQSKVHRAKECLEVVYRSQGNGTPS.

The transit peptide at Met-1–Gln-27 directs the protein to the mitochondrion. Positions Glu-57 to Val-106 are J-like.

It belongs to the TIM16/PAM16 family. In terms of tissue distribution, expressed constitutively and ubiquitously, except in root tips, at low levels.

Its subcellular location is the mitochondrion inner membrane. The protein localises to the cytoplasm. Its function is as follows. Regulates ATP-dependent protein translocation into the mitochondrial matrix. Involved in the uptake of thaxtomin, a phytotoxin produced by Streptomyces bacteria, that causes dramatic cell swelling, reduced seedling growth, and inhibition of cellulose synthesis. Modulates polar auxin transport. Involved in importing a negative regulator of plant immunity into mitochondria, thus protecting plants from over-accumulation of reactive oxygen species (ROS) and preventing autoimmunity. Confers sensitivity to virulent pathogens such as the oomycete H.arabidopsidis Noco2 and the bacteria P.syringae pv. maculicola ES4326. In Arabidopsis thaliana (Mouse-ear cress), this protein is Mitochondrial import inner membrane translocase subunit PAM16 like 2.